Consider the following 553-residue polypeptide: PE cleavage protein A (553 aa).

The 92-residue stretch at 1 to 92 (MSLLVVAPEW…SAGSYSAAEA (92 aa)) folds into the PE domain. The active site involves D293.

This sequence belongs to the mycobacterial PE family. PGRS subfamily. Post-translationally, undergoes auto-proteolytic processing.

It localises to the secreted. The protein localises to the cell surface. Its function is as follows. Aspartic protease that processes the lipase LipY and other PE_PGRS proteins. Can also cleave itself. Cleaves LipY both inside the PE domain, before amino acid 98, and after amino acids 136 and 149. Involved in virulence. This is PE cleavage protein A from Mycobacterium marinum (strain ATCC BAA-535 / M).